Reading from the N-terminus, the 776-residue chain is Protein translocase subunit SecA 2 (776 aa).

ATP is bound by residues Gln80, 98 to 102 (GEGKT), and Asp486.

The protein belongs to the SecA family. In terms of assembly, monomer and homodimer. Part of the essential Sec protein translocation apparatus which comprises SecA, SecYEG and auxiliary proteins SecDF. Other proteins may also be involved.

The protein localises to the cell membrane. Its subcellular location is the cytoplasm. The enzyme catalyses ATP + H2O + cellular proteinSide 1 = ADP + phosphate + cellular proteinSide 2.. Part of the Sec protein translocase complex. Interacts with the SecYEG preprotein conducting channel. Has a central role in coupling the hydrolysis of ATP to the transfer of proteins into and across the cell membrane, serving as an ATP-driven molecular motor driving the stepwise translocation of polypeptide chains across the membrane. The sequence is that of Protein translocase subunit SecA 2 from Listeria monocytogenes serovar 1/2a (strain ATCC BAA-679 / EGD-e).